The following is a 504-amino-acid chain: Catalase (504 aa).

A disordered region spans residues 1 to 25 (MSKQDGKLTGLFGAPVSDRENSMTA). Active-site residues include histidine 56 and asparagine 129. Tyrosine 339 is a heme binding site.

This sequence belongs to the catalase family. As to quaternary structure, homodimer. Heme serves as cofactor.

The catalysed reaction is 2 H2O2 = O2 + 2 H2O. In terms of biological role, decomposes hydrogen peroxide into water and oxygen; serves to protect cells from the toxic effects of hydrogen peroxide. This chain is Catalase (katA), found in Staphylococcus epidermidis (strain ATCC 35984 / DSM 28319 / BCRC 17069 / CCUG 31568 / BM 3577 / RP62A).